Consider the following 226-residue polypeptide: Fibronectin type III domain-containing protein 10 (226 aa).

A signal peptide spans 1-20; the sequence is MRAPPLLLLLAACAPPPCAA. Residues 21 to 182 lie on the Extracellular side of the membrane; the sequence is AAPTPPGWEP…FTAEPAGMQD (162 aa). In terms of domain architecture, Fibronectin type-III spans 74–166; the sequence is PAGRSLRASV…PAAAAPETPE (93 aa). Residues N86 and N109 are each glycosylated (N-linked (GlcNAc...) asparagine). A helical transmembrane segment spans residues 183 to 203; that stretch reads IVVAMTAVGGSICVMLVVICL. Over 204 to 226 the chain is Cytoplasmic; that stretch reads LVAYITENLMRPALARPGLRRHP.

It is found in the membrane. In Homo sapiens (Human), this protein is Fibronectin type III domain-containing protein 10 (FNDC10).